A 360-amino-acid chain; its full sequence is Photosystem II protein D1 (360 aa).

The next 3 membrane-spanning stretches (helical) occupy residues 29-46 (YIGW…TAAS), 118-133 (HFLI…EWEL), and 142-156 (WIFV…AASA). His118 is a binding site for chlorophyll a. Pheophytin a is bound at residue Trp126. [CaMn4O5] cluster contacts are provided by Asp170 and Glu189. Residues 197 to 218 (FHMAGVAGVFGGSLFSAMHGSL) traverse the membrane as a helical segment. Residue His198 coordinates chlorophyll a. Residues His215 and 264-265 (SF) contribute to the a quinone site. His215 serves as a coordination point for Fe cation. A Fe cation-binding site is contributed by His272. The chain crosses the membrane as a helical span at residues 274 to 288 (FLAAWPVVGIWLTAL). Positions 332, 333, 342, and 344 each coordinate [CaMn4O5] cluster. Positions 345 to 360 (SNEILPVAISAPSVVG) are excised as a propeptide.

This sequence belongs to the reaction center PufL/M/PsbA/D family. In terms of assembly, PSII is composed of 1 copy each of membrane proteins PsbA, PsbB, PsbC, PsbD, PsbE, PsbF, PsbH, PsbI, PsbJ, PsbK, PsbL, PsbM, PsbT, PsbX, PsbY, PsbZ, Psb30/Ycf12, at least 3 peripheral proteins of the oxygen-evolving complex and a large number of cofactors. It forms dimeric complexes. The D1/D2 heterodimer binds P680, chlorophylls that are the primary electron donor of PSII, and subsequent electron acceptors. It shares a non-heme iron and each subunit binds pheophytin, quinone, additional chlorophylls, carotenoids and lipids. D1 provides most of the ligands for the Mn4-Ca-O5 cluster of the oxygen-evolving complex (OEC). There is also a Cl(-1) ion associated with D1 and D2, which is required for oxygen evolution. The PSII complex binds additional chlorophylls, carotenoids and specific lipids. serves as cofactor. Tyr-161 forms a radical intermediate that is referred to as redox-active TyrZ, YZ or Y-Z. In terms of processing, C-terminally processed by CTPA; processing is essential to allow assembly of the oxygen-evolving complex and thus photosynthetic growth.

It is found in the plastid. The protein localises to the chloroplast thylakoid membrane. It catalyses the reaction 2 a plastoquinone + 4 hnu + 2 H2O = 2 a plastoquinol + O2. Photosystem II (PSII) is a light-driven water:plastoquinone oxidoreductase that uses light energy to abstract electrons from H(2)O, generating O(2) and a proton gradient subsequently used for ATP formation. It consists of a core antenna complex that captures photons, and an electron transfer chain that converts photonic excitation into a charge separation. The D1/D2 (PsbA/PsbD) reaction center heterodimer binds P680, the primary electron donor of PSII as well as several subsequent electron acceptors. The chain is Photosystem II protein D1 from Ectocarpus siliculosus (Brown alga).